Reading from the N-terminus, the 353-residue chain is Regulatory protein ada (353 aa).

Threonine 34 lines the DNA pocket. The active-site Nucleophile; methyl group acceptor from phosphotriester is cysteine 38. Zn(2+)-binding residues include cysteine 38 and cysteine 42. Residues arginine 43 and arginine 67 each coordinate DNA. 2 residues coordinate Zn(2+): cysteine 69 and cysteine 72. Residues 94 to 183 (LEQETPVTLA…GMTAKQFRKG (90 aa)) enclose the HTH araC/xylS-type domain. 2 consecutive DNA-binding regions (H-T-H motif) follow at residues 103–124 (AFLA…KAST) and 150–173 (ITAA…DQTL). Cysteine 321 (nucleophile; methyl group acceptor) is an active-site residue.

The protein in the C-terminal section; belongs to the MGMT family. Requires Zn(2+) as cofactor.

The enzyme catalyses a 6-O-methyl-2'-deoxyguanosine in DNA + L-cysteinyl-[protein] = S-methyl-L-cysteinyl-[protein] + a 2'-deoxyguanosine in DNA. The catalysed reaction is a 4-O-methyl-thymidine in DNA + L-cysteinyl-[protein] = a thymidine in DNA + S-methyl-L-cysteinyl-[protein]. Involved in the cellular defense against the biological effects of O6-methylguanine (O6-MeG) and O4-methylthymine (O4-MeT) in DNA. Repairs the methylated nucleobase in DNA by stoichiometrically transferring the methyl group to a cysteine residue in the enzyme. This is a suicide reaction: the enzyme is irreversibly inactivated. In terms of biological role, the methylated ADA protein acts as a positive regulator of its own synthesis, as well as that of other proteins. The transcription-activating function of the ADA protein resides in its N-terminus. It activates the transcription of alkA, alkB and aidB. This is Regulatory protein ada (ada) from Salmonella typhimurium (strain LT2 / SGSC1412 / ATCC 700720).